Reading from the N-terminus, the 139-residue chain is Nucleoside diphosphate kinase (139 aa).

6 residues coordinate ATP: Lys-10, Phe-58, Arg-86, Thr-92, Arg-103, and Asn-113. His-116 (pros-phosphohistidine intermediate) is an active-site residue.

This sequence belongs to the NDK family. As to quaternary structure, homotetramer. The cofactor is Mg(2+).

It localises to the cytoplasm. It carries out the reaction a 2'-deoxyribonucleoside 5'-diphosphate + ATP = a 2'-deoxyribonucleoside 5'-triphosphate + ADP. The enzyme catalyses a ribonucleoside 5'-diphosphate + ATP = a ribonucleoside 5'-triphosphate + ADP. In terms of biological role, major role in the synthesis of nucleoside triphosphates other than ATP. The ATP gamma phosphate is transferred to the NDP beta phosphate via a ping-pong mechanism, using a phosphorylated active-site intermediate. The protein is Nucleoside diphosphate kinase of Caulobacter vibrioides (strain ATCC 19089 / CIP 103742 / CB 15) (Caulobacter crescentus).